Consider the following 901-residue polypeptide: Vacuolar protein sorting-associated protein 41 homolog (901 aa).

Residues 1 to 37 form a disordered region; sequence MDETHENEASDSFDPVFENSYHDDVTFNTEDDDEPPL. Residues 618 to 760 form a CHCR repeat; it reads LRLLLDNADS…VAEFPAHFSQ (143 aa). The RING-type; atypical zinc-finger motif lies at 839 to 893; sequence CSLCAQIIINSNQETTKKFSDIKVFKCGHIFHLACSTSEMERRQSIEEGLCIACS.

The protein belongs to the VPS41 family. As to quaternary structure, probable component of the homotypic fusion and vacuole protein sorting (HOPS) complex consisting of the core class C Vps proteins vps-11, vps-16, vps-18, and which further associates with vps-33.1, vps-39 and vps-41.

The protein resides in the endosome membrane. It localises to the late endosome membrane. The protein localises to the early endosome membrane. Its subcellular location is the lysosome membrane. It is found in the golgi apparatus. The protein resides in the trans-Golgi network. It localises to the cytoplasmic vesicle. The protein localises to the clathrin-coated vesicle. Its subcellular location is the cytoplasm. It is found in the cytosol. In terms of biological role, plays a role in vesicle-mediated protein trafficking to lysosomal compartments including the endocytic membrane transport pathways. Believed to act in part as a core component of the putative HOPS endosomal tethering complex which is proposed to be involved in the rab-5-to-rab-7 endosome conversion probably implicating sand-1, and via binding SNAREs and SNARE complexes to mediate tethering and docking events during SNARE-mediated membrane fusion. The HOPS complex is proposed to be recruited to rab-7 on the late endosomal membrane and to regulate late endocytic, phagocytic and autophagic traffic towards lysosomes. Within the HOPS complex, contributes to the normal development of gut granules in the adult intestine. May mediate the tethering of autophagosomes with lysosomes. Has a role in the negative regulation of apoptosis. Required for uptake of exogenous dsRNA which is used in experimental RNA silencing. The sequence is that of Vacuolar protein sorting-associated protein 41 homolog from Caenorhabditis elegans.